Here is a 412-residue protein sequence, read N- to C-terminus: FAD-dependent monooxygenase nscC (412 aa).

Positions 1–21 are cleaved as a signal peptide; that stretch reads MGKQQETILIIGAGIAGLTTS. FAD contacts are provided by Glu35 and Ala46. An N-linked (GlcNAc...) asparagine glycan is attached at Asn92. FAD is bound at residue Arg119. Asn170 and Asn231 each carry an N-linked (GlcNAc...) asparagine glycan. Positions 326 and 339 each coordinate FAD.

It belongs to the paxM FAD-dependent monooxygenase family. Requires FAD as cofactor.

It functions in the pathway secondary metabolite biosynthesis. FAD-dependent monooxygenase; part of the gene cluster that mediates the biosynthesis of neosartoricin B, a prenylated anthracenone that probably exhibits T-cell antiproliferative activity, suggestive of a physiological role as an immunosuppressive agent. The non-reducing polyketide synthase nscA probably synthesizes and cyclizes the decaketide backbone. The hydrolase nscB then mediates the product release through hydrolysis followed by spontaneous decarboxylation. The prenyltransferase nscD catalyzes the addition of the dimethylallyl group to the aromatic C5. The FAD-dependent monooxygenase nscC is then responsible for the stereospecific hydroxylation at C2. Neosartoricin B can be converted into two additional compounds neosartoricins C and D. Neosartoricin C is a spirocyclic compound that is cyclized through the attack of C3 hydroxyl on C14, followed by dehydration. On the other hand, neosartoricin D is a further cyclized compound in which attack of C2 on C14 in neosartoricin C results in the formation of the acetal-containing dioxabicyclo-octanone ring. Both of these compounds are novel and possibly represent related metabolites of the gene cluster. This chain is FAD-dependent monooxygenase nscC, found in Arthroderma benhamiae (strain ATCC MYA-4681 / CBS 112371) (Trichophyton mentagrophytes).